The primary structure comprises 892 residues: Translation initiation factor IF-2 (892 aa).

Composition is skewed to basic and acidic residues over residues 93–159 (VKRD…KDKV) and 166–216 (DMTK…EENK). Residues 93–304 (VKRDPQEAER…SSLQQGFQKP (212 aa)) form a disordered region. Residues 254 to 269 (GRGRNAKAARPAKKGK) show a composition bias toward basic residues. The segment covering 270 to 282 (HAESKADREEARA) has biased composition (basic and acidic residues). In terms of domain architecture, tr-type G spans 391-560 (PRAPVVTIMG…LLQAEVLELK (170 aa)). Positions 400 to 407 (GHVDHGKT) are G1. 400–407 (GHVDHGKT) lines the GTP pocket. Positions 425-429 (GITQH) are G2. The interval 446–449 (DTPG) is G3. GTP contacts are provided by residues 446–450 (DTPGH) and 500–503 (NKID). Positions 500–503 (NKID) are G4. The tract at residues 536 to 538 (SAK) is G5.

The protein belongs to the TRAFAC class translation factor GTPase superfamily. Classic translation factor GTPase family. IF-2 subfamily.

Its subcellular location is the cytoplasm. One of the essential components for the initiation of protein synthesis. Protects formylmethionyl-tRNA from spontaneous hydrolysis and promotes its binding to the 30S ribosomal subunits. Also involved in the hydrolysis of GTP during the formation of the 70S ribosomal complex. In Salmonella gallinarum (strain 287/91 / NCTC 13346), this protein is Translation initiation factor IF-2.